Reading from the N-terminus, the 578-residue chain is Threonylcarbamoyladenosine tRNA methylthiotransferase (578 aa).

One can recognise an MTTase N-terminal domain in the interval 63-171; sequence QKIWIRTWGC…VVEVVEETIK (109 aa). The [4Fe-4S] cluster site is built by C72 and C108. The residue at position 121 (S121) is a Phosphoserine. Residues C137, C213, C217, and C220 each contribute to the [4Fe-4S] cluster site. In terms of domain architecture, Radical SAM core spans 199 to 430; it reads RKNPLIEIIS…RVFHSYNPYD (232 aa). One can recognise a TRAM domain in the interval 430–492; it reads DHKIGERQQV…KHFLKGQPVS (63 aa). T498 is modified (phosphothreonine). The helical transmembrane segment at 553–570 threads the bilayer; sequence CALKVATGLALLALLLHF.

It belongs to the methylthiotransferase family. CDKAL1 subfamily. It depends on [4Fe-4S] cluster as a cofactor. Expressed in pancreas, liver and skeletal muscle, especially in white muscle fibers.

The protein localises to the endoplasmic reticulum membrane. It carries out the reaction N(6)-L-threonylcarbamoyladenosine(37) in tRNA + (sulfur carrier)-SH + AH2 + 2 S-adenosyl-L-methionine = 2-methylsulfanyl-N(6)-L-threonylcarbamoyladenosine(37) in tRNA + (sulfur carrier)-H + 5'-deoxyadenosine + L-methionine + A + S-adenosyl-L-homocysteine + 2 H(+). Functionally, catalyzes the methylthiolation of N6-threonylcarbamoyladenosine (t(6)A), leading to the formation of 2-methylthio-N6-threonylcarbamoyladenosine (ms(2)t(6)A) at position 37 in tRNAs that read codons beginning with adenine. This is Threonylcarbamoyladenosine tRNA methylthiotransferase (Cdkal1) from Mus musculus (Mouse).